Here is a 538-residue protein sequence, read N- to C-terminus: MEIKEISVPQQGVVADYMNGKKEIQSCFDYMLTEDAFKQRVQDLREREFFRQDLVAHLLEYNTKLQAGEATIQNVKALEDEDTYVVIAGQQAGLLTGPLYTIHKIISVLQLAKEKEESLGVKVVPVFWIAGEDHDMDEINHTFVTKNKKIKKTIFHDRNPKKASASESELSLEDCRKWIEEIFKTYPETNFTKDVLRFIDDSLRKSNTYVDFFGHLIMKMFMNSGLILVDSHHPELRKLEVPFFKQIVSKYKEVQEGLHNQQEVIKELGYKPIIETKSNAVHIFMEIDNERVLLEDNQRKFVGKDGTYSFSYEELIEEMERSPERFSNNVVTRPLMQEYVFPTLAFIGGPGELAYWSELQQVFHAIGFRMPPVVPRITITYIERDIATDLHDLQLQESDPFLNNVDKLRENWLSNQIEEPIDERFEEAKKEIIDIHKSLQQFVKKIDPGLSSFAGKNEFKINEQIELLERMLKRNVEKKHEVELNKFRRIQFAIRPLGAPQERVWNVCYYLNQFGLDFVDRVMEKPFSWDGKHHVIKL.

Residues 460-484 (KINEQIELLERMLKRNVEKKHEVEL) are a coiled coil.

It belongs to the BshC family.

Functionally, involved in bacillithiol (BSH) biosynthesis. May catalyze the last step of the pathway, the addition of cysteine to glucosamine malate (GlcN-Mal) to generate BSH. In Bacillus cereus (strain AH187), this protein is Putative cysteine ligase BshC.